We begin with the raw amino-acid sequence, 313 residues long: Porphobilinogen deaminase (313 aa).

Cys242 bears the S-(dipyrrolylmethanemethyl)cysteine mark.

It belongs to the HMBS family. As to quaternary structure, monomer. Requires dipyrromethane as cofactor.

It catalyses the reaction 4 porphobilinogen + H2O = hydroxymethylbilane + 4 NH4(+). It functions in the pathway porphyrin-containing compound metabolism; protoporphyrin-IX biosynthesis; coproporphyrinogen-III from 5-aminolevulinate: step 2/4. Functionally, tetrapolymerization of the monopyrrole PBG into the hydroxymethylbilane pre-uroporphyrinogen in several discrete steps. The polypeptide is Porphobilinogen deaminase (Pseudomonas fluorescens (strain Pf0-1)).